A 1072-amino-acid polypeptide reads, in one-letter code: LRR receptor-like serine/threonine-protein kinase RGI5 (1072 aa).

Positions 1 to 21 are cleaved as a signal peptide; it reads MERERSNFFFLFLFCSWVSMA. Topologically, residues 22-706 are extracellular; that stretch reads QPTLSLSSDG…NGVKSPKIVA (685 aa). Residues Cys56 and Cys63 are joined by a disulfide bond. LRR repeat units lie at residues 66–89, 90–113, 114–138, 140–162, 164–185, 187–211, 212–234, 235–259, 260–283, 285–307, 308–331, 332–355, 356–379, 381–402, 403–427, 429–451, 452–475, 477–499, 500–523, 524–546, 548–571, 572–595, 597–619, 620–642, and 643–667; these read DNRV…DLSS, LSSL…SFGK, LTHL…LGRL, TLQF…ISNL, ALQV…SFGS, VSLQ…LGFL, KNLT…TFGN, LVNL…LGLC, SELR…LGKL, KITS…ISNC, SSLV…LGKL, VWLE…LSNC, SSLI…IGNL, SLQS…SFGN, CTDL…LFSL, RLSK…VAKC, QSLV…IGEL, NLVF…ISNI, TVLE…LGNL, VNLE…SFGN, SYLN…IKNL, QKLT…LGQV, SLTI…TFSD, LTQL…VLGS, and LTSL…PFFK. 3 N-linked (GlcNAc...) asparagine glycosylation sites follow: Asn80, Asn97, and Asn102. Residues 171 to 172 carry the Small peptide recognition motif; the sequence is QD. An N-linked (GlcNAc...) asparagine glycan is attached at Asn176. Residues 193–196 carry the Small peptide recognition motif; that stretch reads RLGG. Asn213 is a glycosylation site (N-linked (GlcNAc...) asparagine). 3 short sequence motifs (small peptide recognition) span residues 216-221, Tyr244, and 266-268; these read TLGFAA and YLH. N-linked (GlcNAc...) asparagine glycosylation is present at Asn306. 2 short sequence motifs (small peptide recognition) span residues 314 to 317 and 336 to 338; these read DVSA and QLQ. N-linked (GlcNAc...) asparagine glycosylation is present at Asn354. The Small peptide recognition motif lies at 384–388; it reads SFFLW. Asn402 carries an N-linked (GlcNAc...) asparagine glycan. Short sequence motifs (small peptide recognition) lie at residues 410–413, 432–436, and 456–458; these read DLSR, KLLLL, and RLR. The N-linked (GlcNAc...) asparagine glycan is linked to Asn498. The N-linked (GlcNAc...) asparagine glycan is linked to Asn546. N-linked (GlcNAc...) asparagine glycans are attached at residues Asn650 and Asn655. A helical transmembrane segment spans residues 707-727; that stretch reads LTAVILASITIAILAAWLLIL. Topologically, residues 728–1072 are cytoplasmic; the sequence is RNNHLYKTSQ…SQPLIKPSSS (345 aa). The residue at position 764 (Thr764) is a Phosphothreonine. Residues 772-1067 enclose the Protein kinase domain; sequence LTDENVIGKG…EWGKTSQPLI (296 aa). ATP-binding positions include 778–786 and Lys800; that span reads IGKGCSGIV. Phosphotyrosine occurs at positions 851 and 887. Asp900 acts as the Proton acceptor in catalysis. At Ser936 the chain carries Phosphoserine. Phosphotyrosine is present on residues Tyr944 and Tyr951. Position 952 is a phosphothreonine (Thr952).

The protein belongs to the protein kinase superfamily. Ser/Thr protein kinase family. In terms of assembly, binds to RGF1; this interaction triggers the formation of heterodimers with SERK1. Phosphorylated and ubiquitinated upon interaction with RGF1, thus leading to activation a subsequent degradation. In terms of processing, autophosphorylated. As to expression, expressed in roots and hypocotyls.

The protein resides in the membrane. The enzyme catalyses L-seryl-[protein] + ATP = O-phospho-L-seryl-[protein] + ADP + H(+). It catalyses the reaction L-threonyl-[protein] + ATP = O-phospho-L-threonyl-[protein] + ADP + H(+). Its function is as follows. Together with RGI1, RGI2, RGI3 and RGI4, acts as a receptor of RGF1, a peptide hormone that maintains the postembryonic root stem cell niche by regulating the expression levels and patterns of the transcription factor PLETHORA (PLT). Links RGF1 signal with its downstream components. This Arabidopsis thaliana (Mouse-ear cress) protein is LRR receptor-like serine/threonine-protein kinase RGI5.